The primary structure comprises 578 residues: Forkhead box protein P1 (578 aa).

A C2H2-type zinc finger spans residues 208 to 233; it reads GVCKWPGCETICEDFPSFLKHLNSEH. The segment at 250–271 is leucine-zipper; that stretch reads VQQLELQLSKDKERLQAMMSHL. Positions 284–288 are ctbp1-binding; that stretch reads PLNLV. The span at 293–305 shows a compositional bias: polar residues; sequence LSKTASEASPQSL. The tract at residues 293–325 is disordered; that stretch reads LSKTASEASPQSLPHTPTTPTAPLTPITQGPSV. Residues 306–320 show a composition bias toward low complexity; the sequence is PHTPTTPTAPLTPIT. Positions 366 to 456 form a DNA-binding region, fork-head; that stretch reads RPPFTYASLI…PQKISGSPTL (91 aa). The disordered stretch occupies residues 511–578; sequence MEHTSSNGSD…EDDPVNDDME (68 aa). Low complexity predominate over residues 515–527; the sequence is SSNGSDSSPGRSP. The span at 568–578 shows a compositional bias: acidic residues; the sequence is YEDDPVNDDME.

As to quaternary structure, dimerization is required for DNA-binding. Isoform a, but not isoform b, interacts with ctbp1. As to expression, all isoforms show similar spatial expression. Localized to the animal hemisphere of early cleavage stage embryos. At tailbud stages, expressed in regions of the brain, eye and the splanchnic mesodermal layer of the lateral plate mesoderm surrounding the gut. At stage 35, expressed within the lens of the eye, in distinct regions of the head mesenchyme and in the area anterior to the gut. In the brain the anterior-most expression is restricted to the outer region of the mesencephalon. With ongoing development, additional expression is found in the curling gut.

It localises to the nucleus. Its function is as follows. Transcriptional repressor. This Xenopus laevis (African clawed frog) protein is Forkhead box protein P1.